A 950-amino-acid polypeptide reads, in one-letter code: Protocadherin alpha-3 (950 aa).

Positions 1 to 29 (MLFSWREDPGAQCLLLSLLLLAASEVGSG) are cleaved as a signal peptide. 6 Cadherin domains span residues 30 to 133 (QLHY…APVF), 134 to 242 (PMAV…APAF), 243 to 350 (ERTI…VPEL), 351 to 455 (VIQS…APAF), 456 to 565 (SQSE…APAL), and 581 to 678 (VPRS…APKA). Over 30-697 (QLHYSVSEEA…GPEAALVDVN (668 aa)) the chain is Extracellular. N257 and N265 each carry an N-linked (GlcNAc...) asparagine glycan. Residue N548 is glycosylated (N-linked (GlcNAc...) asparagine). A helical membrane pass occupies residues 698-718 (VYLIVAICAVSSLLVLTLLLY). At 719 to 950 (TALRCSAPPT…GNSTTDNSDQ (232 aa)) the chain is on the cytoplasmic side. 2 PXXP repeats span residues 734–737 (PGKP) and 774–777 (PSLP). Residues 734-894 (PGKPTLVCSS…PDKFIIPGSP (161 aa)) form a 6 X 4 AA repeats of P-X-X-P region. Disordered regions lie at residues 777 to 806 (PPCPISRDREEKQDVDVDLSAKPRQPNPDW), 831 to 856 (GPGGPDQQWPTVSSATPEPEAGEVSP), and 869 to 950 (FKYG…NSDQ). Basic and acidic residues predominate over residues 782 to 797 (SRDREEKQDVDVDLSA). PXXP repeat units follow at residues 799 to 802 (PRQP), 832 to 835 (PGGP), 873 to 876 (PGNP), and 891 to 894 (PGSP). Over residues 909 to 923 (DKSDFITFGKKEETK) the composition is skewed to basic and acidic residues.

It localises to the cell membrane. Functionally, potential calcium-dependent cell-adhesion protein. May be involved in the establishment and maintenance of specific neuronal connections in the brain. In Homo sapiens (Human), this protein is Protocadherin alpha-3 (PCDHA3).